A 1758-amino-acid chain; its full sequence is uncharacterized protein (1758 aa).

The first 12 residues, 1–12, serve as a signal peptide directing secretion; the sequence is MCFFLGSRLAYA. The 294-residue stretch at 1465 to 1758 folds into the Autotransporter domain; that stretch reads ENLYNNGMWI…SFILGGNYYF (294 aa).

It is found in the cell outer membrane. This is an uncharacterized protein from Escherichia coli (strain K12).